Here is a 602-residue protein sequence, read N- to C-terminus: Wings apart-like protein homolog 1 (602 aa).

The interval 34–66 is disordered; the sequence is NKQKRSPGQTVSKRLHKKQRVVSNPDLSLPSSP. Over residues 54 to 66 the composition is skewed to polar residues; the sequence is VVSNPDLSLPSSP. Residues 160 to 492 form the WAPL domain; sequence IQMKSIHELR…LGLVEESHEF (333 aa).

Belongs to the WAPL family.

The protein resides in the nucleus. It is found in the chromosome. Functionally, regulator of sister chromatid cohesion in mitosis which negatively regulates cohesin association with chromatin. The protein is Wings apart-like protein homolog 1 (wpl1) of Schizosaccharomyces pombe (strain 972 / ATCC 24843) (Fission yeast).